We begin with the raw amino-acid sequence, 667 residues long: Probable potassium transport system protein Kup (667 aa).

Transmembrane regions (helical) follow at residues 16–36 (GFII…LYTM), 58–78 (VSLI…LIAL), 101–121 (WLII…ALTP), 146–166 (TNVI…QRFG), 167–187 (TGVI…VLGI), 221–241 (IFIL…YSDL), 253–273 (WPFV…WILA), 294–314 (VYLV…LISG), 343–363 (LYIP…VLYF), 373–393 (YGLA…YYLI), 399–419 (PLLA…FFLA), and 424–444 (FMHG…VMVI).

This sequence belongs to the HAK/KUP transporter (TC 2.A.72) family.

Its subcellular location is the cell membrane. The catalysed reaction is K(+)(in) + H(+)(in) = K(+)(out) + H(+)(out). Functionally, transport of potassium into the cell. Likely operates as a K(+):H(+) symporter. The sequence is that of Probable potassium transport system protein Kup from Streptococcus equi subsp. equi (strain 4047).